The primary structure comprises 114 residues: UPF0060 membrane protein GDI3492/Gdia_2889 (114 aa).

The next 4 helical transmembrane spans lie at 8–28, 35–55, 64–84, and 92–112; these read FAVY…WWCW, AWVL…LTLV, FAAY…LVEG, and AAGV…GRGA.

This sequence belongs to the UPF0060 family.

Its subcellular location is the cell inner membrane. This is UPF0060 membrane protein GDI3492/Gdia_2889 from Gluconacetobacter diazotrophicus (strain ATCC 49037 / DSM 5601 / CCUG 37298 / CIP 103539 / LMG 7603 / PAl5).